Consider the following 326-residue polypeptide: Probable iron chelatin transport system permease protein jhp_0822 (326 aa).

10 helical membrane passes run 7–27, 64–84, 91–111, 113–133, 142–162, 164–184, 187–207, 241–261, 275–295, and 301–321; these read IALA…ESLS, ILAL…QTIL, PFLL…IAVV, SNIA…VLAM, LSLV…AGAI, FFVI…SLSL, YKDC…LFLL, VASA…LVIP, LLLS…VVAK, and DLPV…WLLF.

It belongs to the binding-protein-dependent transport system permease family. FecCD subfamily.

The protein resides in the cell inner membrane. Functionally, part of a binding-protein-dependent transport system for an iron chelatin; probably responsible for the translocation of the substrate across the membrane. In Helicobacter pylori (strain J99 / ATCC 700824) (Campylobacter pylori J99), this protein is Probable iron chelatin transport system permease protein jhp_0822.